The chain runs to 476 residues: Ribulose bisphosphate carboxylase large chain (476 aa).

A propeptide spanning residues Met-1–Ser-2 is cleaved from the precursor. Position 3 is an N-acetylproline (Pro-3). Lys-14 bears the N6,N6,N6-trimethyllysine mark. Positions 123 and 173 each coordinate substrate. Residue Lys-175 is the Proton acceptor of the active site. Lys-177 lines the substrate pocket. Mg(2+)-binding residues include Lys-201, Asp-203, and Glu-204. Lys-201 carries the post-translational modification N6-carboxylysine. Residue His-294 is the Proton acceptor of the active site. The substrate site is built by Arg-295, His-327, and Ser-379.

This sequence belongs to the RuBisCO large chain family. Type I subfamily. As to quaternary structure, heterohexadecamer of 8 large chains and 8 small chains; disulfide-linked. The disulfide link is formed within the large subunit homodimers. Requires Mg(2+) as cofactor. The disulfide bond which can form in the large chain dimeric partners within the hexadecamer appears to be associated with oxidative stress and protein turnover.

The protein resides in the plastid. It is found in the chloroplast. The enzyme catalyses 2 (2R)-3-phosphoglycerate + 2 H(+) = D-ribulose 1,5-bisphosphate + CO2 + H2O. The catalysed reaction is D-ribulose 1,5-bisphosphate + O2 = 2-phosphoglycolate + (2R)-3-phosphoglycerate + 2 H(+). RuBisCO catalyzes two reactions: the carboxylation of D-ribulose 1,5-bisphosphate, the primary event in carbon dioxide fixation, as well as the oxidative fragmentation of the pentose substrate in the photorespiration process. Both reactions occur simultaneously and in competition at the same active site. This Zea mays (Maize) protein is Ribulose bisphosphate carboxylase large chain.